Here is a 291-residue protein sequence, read N- to C-terminus: Phosphatidylglycerol--prolipoprotein diacylglyceryl transferase (291 aa).

The next 4 helical transmembrane spans lie at 24-44 (WYALAYIGGIMLGWLYARALL), 64-84 (FILWVTIAIIVGGRVGYVLFY), 100-120 (WNGGMSFHGGFMGCVAAVILF), and 125-145 (GLPILSLGDVATAVGPIGLFL). Arg-147 is an a 1,2-diacyl-sn-glycero-3-phospho-(1'-sn-glycerol) binding site. The next 3 helical transmembrane spans lie at 187-207 (AALEGILLFTILALMIRLGAL), 211-231 (GLVLGSFIALYAMARIVAEFF), and 247-267 (MGMLLSIPMVIIGLAIVYAAW).

This sequence belongs to the Lgt family.

It is found in the cell inner membrane. The catalysed reaction is L-cysteinyl-[prolipoprotein] + a 1,2-diacyl-sn-glycero-3-phospho-(1'-sn-glycerol) = an S-1,2-diacyl-sn-glyceryl-L-cysteinyl-[prolipoprotein] + sn-glycerol 1-phosphate + H(+). It participates in protein modification; lipoprotein biosynthesis (diacylglyceryl transfer). Functionally, catalyzes the transfer of the diacylglyceryl group from phosphatidylglycerol to the sulfhydryl group of the N-terminal cysteine of a prolipoprotein, the first step in the formation of mature lipoproteins. This chain is Phosphatidylglycerol--prolipoprotein diacylglyceryl transferase, found in Nitrobacter winogradskyi (strain ATCC 25391 / DSM 10237 / CIP 104748 / NCIMB 11846 / Nb-255).